We begin with the raw amino-acid sequence, 518 residues long: Bifunctional purine biosynthesis protein PurH (518 aa).

One can recognise an MGS-like domain in the interval M1–T146.

Belongs to the PurH family.

The catalysed reaction is (6R)-10-formyltetrahydrofolate + 5-amino-1-(5-phospho-beta-D-ribosyl)imidazole-4-carboxamide = 5-formamido-1-(5-phospho-D-ribosyl)imidazole-4-carboxamide + (6S)-5,6,7,8-tetrahydrofolate. It catalyses the reaction IMP + H2O = 5-formamido-1-(5-phospho-D-ribosyl)imidazole-4-carboxamide. The protein operates within purine metabolism; IMP biosynthesis via de novo pathway; 5-formamido-1-(5-phospho-D-ribosyl)imidazole-4-carboxamide from 5-amino-1-(5-phospho-D-ribosyl)imidazole-4-carboxamide (10-formyl THF route): step 1/1. It functions in the pathway purine metabolism; IMP biosynthesis via de novo pathway; IMP from 5-formamido-1-(5-phospho-D-ribosyl)imidazole-4-carboxamide: step 1/1. In Prochlorococcus marinus (strain NATL2A), this protein is Bifunctional purine biosynthesis protein PurH.